The primary structure comprises 350 residues: MVEFCVLFGGASFEHEISIVSAIALKEVLKDQIKYFIFLDENHHFYLIEASNMHSKYFAQIKEKKLPPLMLTHNGLLKNSFLGAKTIELPLMINLVHGGDGEDGKLASLLEFYRIAFIGSRVEASVLSYNKHLTKLYAKNLGVKTLDCILLNEKNRANALDLIKPSFNFPFIVKPNNAGSSLGVSVVKEEKELAYALDGAFEYSKEVLIEPFIQRVKEYNLAGCKIKEDFCFSYVEEPNKQEFLDFKQKYLDFSRTKAPKANIPNALEEQLRENFKKLYNDLFDGAIIRCDFFVIDNEVYLNEINPIPGSLANYLFDDFKTTLENLAQSLPKTPKIQVKNSYLLQIQKNK.

Residues 135 to 335 (KLYAKNLGVK…LAQSLPKTPK (201 aa)) form the ATP-grasp domain. 164–219 (KPSFNFPFIVKPNNAGSSLGVSVVKEEKELAYALDGAFEYSKEVLIEPFIQRVKEY) contributes to the ATP binding site. Mg(2+)-binding residues include Asp291, Glu303, and Asn305.

It belongs to the D-alanine--D-alanine ligase family. Requires Mg(2+) as cofactor. It depends on Mn(2+) as a cofactor.

It is found in the cytoplasm. The catalysed reaction is 2 D-alanine + ATP = D-alanyl-D-alanine + ADP + phosphate + H(+). It functions in the pathway cell wall biogenesis; peptidoglycan biosynthesis. In terms of biological role, cell wall formation. This Helicobacter acinonychis (strain Sheeba) protein is D-alanine--D-alanine ligase.